We begin with the raw amino-acid sequence, 163 residues long: DNA endonuclease I-CreI (163 aa).

Mg(2+) contacts are provided by glycine 19 and aspartate 20. 4 interaction with DNA regions span residues glutamine 26–glutamine 38, glutamine 44–glutamine 47, arginine 68–arginine 70, and serine 138–threonine 143.

This sequence belongs to the LAGLIDADG endonuclease family. As to quaternary structure, homodimer. Mg(2+) is required as a cofactor. Requires Mn(2+) as cofactor. It depends on Co(2+) as a cofactor. The cofactor is Ni(2+). Zn(2+) serves as cofactor.

The protein localises to the plastid. Its subcellular location is the chloroplast. In terms of biological role, endonuclease involved in group I intron homing. Recognizes and cleaves a 19-24 bp palindromic DNA site. The sequence is that of DNA endonuclease I-CreI from Chlamydomonas reinhardtii (Chlamydomonas smithii).